Reading from the N-terminus, the 72-residue chain is Large ribosomal subunit protein bL32c (72 aa).

A disordered region spans residues 49–72; sequence PPAPVSENWDDEAKGFGKDLDAAE. Basic and acidic residues predominate over residues 59 to 72; that stretch reads DEAKGFGKDLDAAE.

It belongs to the bacterial ribosomal protein bL32 family.

Its subcellular location is the plastid. The protein resides in the chloroplast. The polypeptide is Large ribosomal subunit protein bL32c (Ostreococcus tauri).